A 493-amino-acid polypeptide reads, in one-letter code: Cysteine--tRNA ligase (493 aa).

Zn(2+) is bound at residue Cys-29. The short motif at 31–41 is the 'HIGH' region element; that stretch reads VTVYDLCHLGH. Positions 154–179 are disordered; the sequence is KLSGRDPDDQQQGASGRTADGEESRK. Positions 213, 238, and 242 each coordinate Zn(2+). Residues 270–274 carry the 'KMSKS' region motif; sequence KMSKS. Position 273 (Lys-273) interacts with ATP.

This sequence belongs to the class-I aminoacyl-tRNA synthetase family. In terms of assembly, monomer. It depends on Zn(2+) as a cofactor.

It localises to the cytoplasm. It carries out the reaction tRNA(Cys) + L-cysteine + ATP = L-cysteinyl-tRNA(Cys) + AMP + diphosphate. The sequence is that of Cysteine--tRNA ligase from Synechococcus sp. (strain CC9605).